A 189-amino-acid polypeptide reads, in one-letter code: Adenylate kinase (189 aa).

Residue 11-16 (GSGKGT) coordinates ATP. The interval 31–60 (STGDVLRAEIKKGTELGKTAKGYIDQGQLL) is NMP. AMP contacts are provided by residues threonine 32, arginine 37, 58-60 (QLL), 86-89 (GFPR), and glutamine 93. The LID stretch occupies residues 127–137 (KRGQESGRADD). Residue arginine 128 coordinates ATP. AMP-binding residues include arginine 134 and arginine 145. Residue glycine 173 participates in ATP binding.

The protein belongs to the adenylate kinase family. In terms of assembly, monomer.

Its subcellular location is the cytoplasm. It catalyses the reaction AMP + ATP = 2 ADP. Its pathway is purine metabolism; AMP biosynthesis via salvage pathway; AMP from ADP: step 1/1. Functionally, catalyzes the reversible transfer of the terminal phosphate group between ATP and AMP. Plays an important role in cellular energy homeostasis and in adenine nucleotide metabolism. The sequence is that of Adenylate kinase from Phocaeicola vulgatus (strain ATCC 8482 / DSM 1447 / JCM 5826 / CCUG 4940 / NBRC 14291 / NCTC 11154) (Bacteroides vulgatus).